The chain runs to 108 residues: Nucleoid-associated protein Bpet3552 (108 aa).

It belongs to the YbaB/EbfC family. As to quaternary structure, homodimer.

Its subcellular location is the cytoplasm. It localises to the nucleoid. In terms of biological role, binds to DNA and alters its conformation. May be involved in regulation of gene expression, nucleoid organization and DNA protection. The chain is Nucleoid-associated protein Bpet3552 from Bordetella petrii (strain ATCC BAA-461 / DSM 12804 / CCUG 43448).